The primary structure comprises 938 residues: Probable glutamyl endopeptidase, chloroplastic (938 aa).

A chloroplast-targeting transit peptide spans Met-1–Val-54. Low complexity predominate over residues Gly-58–Gly-76. The segment at Gly-58 to Leu-77 is disordered. Residues Ser-762, Asp-836, and His-870 each act as charge relay system in the active site. Over residues Ser-897–Val-913 the composition is skewed to polar residues. Residues Ser-897–Leu-938 form a disordered region.

It belongs to the peptidase S9D family.

The protein resides in the plastid. Its subcellular location is the chloroplast stroma. Serine-type protease active in vitro against the LHCII N-terminal. Cleaves its substrate on the carboxy-side of Glu residues. The chain is Probable glutamyl endopeptidase, chloroplastic (GEP) from Oryza sativa subsp. japonica (Rice).